Here is a 179-residue protein sequence, read N- to C-terminus: Photosystem I assembly protein Ycf4 (179 aa).

The next 2 helical transmembrane spans lie at 21–41 (LISF…YLGV) and 59–79 (IVMT…LLNI).

This sequence belongs to the Ycf4 family.

The protein resides in the plastid. It localises to the chloroplast thylakoid membrane. Its function is as follows. Seems to be required for the assembly of the photosystem I complex. This is Photosystem I assembly protein Ycf4 from Rhodomonas salina (Cryptomonas salina).